The following is a 509-amino-acid chain: Maturase K (509 aa).

Belongs to the intron maturase 2 family. MatK subfamily.

Its subcellular location is the plastid. The protein localises to the chloroplast. Usually encoded in the trnK tRNA gene intron. Probably assists in splicing its own and other chloroplast group II introns. The polypeptide is Maturase K (Citrus sinensis (Sweet orange)).